The following is a 400-amino-acid chain: Chaperone protein DnaJ (400 aa).

A J domain is found at 4 to 69 (DYYETLGVTR…DKRRRYDQFG (66 aa)). The segment at 156 to 237 (GVEKTLKVKR…CYGEGIKLGE (82 aa)) adopts a CR-type zinc-finger fold. Zn(2+)-binding residues include C169, C172, C185, C188, C211, C214, C225, and C228. 4 CXXCXGXG motif repeats span residues 169 to 176 (CEVCNGTG), 185 to 192 (CQTCHGSG), 211 to 218 (CPTCGGEG), and 225 to 232 (CTACYGEG).

Belongs to the DnaJ family. Homodimer. Requires Zn(2+) as cofactor.

It localises to the cytoplasm. Functionally, participates actively in the response to hyperosmotic and heat shock by preventing the aggregation of stress-denatured proteins and by disaggregating proteins, also in an autonomous, DnaK-independent fashion. Unfolded proteins bind initially to DnaJ; upon interaction with the DnaJ-bound protein, DnaK hydrolyzes its bound ATP, resulting in the formation of a stable complex. GrpE releases ADP from DnaK; ATP binding to DnaK triggers the release of the substrate protein, thus completing the reaction cycle. Several rounds of ATP-dependent interactions between DnaJ, DnaK and GrpE are required for fully efficient folding. Also involved, together with DnaK and GrpE, in the DNA replication of plasmids through activation of initiation proteins. In Chlorobium chlorochromatii (strain CaD3), this protein is Chaperone protein DnaJ.